The chain runs to 1458 residues: MVNTRKSSLRLLGSKSPGPGPGPGAGAEPGATGGSSHFISSRTRSSKTRAASCPAAKAGGSGGAGVTLDEARKVEVDGSLSDSHVSPPAKRTLKQPDSVCKDKSKSRSTGQREEWNLSTGQARLTSQPGATLPNGHSGLSLRSHPLRGEKKGDGDLSCINGDMEVRKSCRSRKNRFESVNQSLLFDQLVNSTAEAVLQEMDNINIRRNRRSGEVERLRMWTDTEFENMDMYSRVKRRRKSLRRNSYGIQNHHEVSTEGEEEESQEEDGDIEVEEAEGEENDRPYNLRQRKTVDRYQAPPIVPAHQKKRENTLFDIHRSPARRSHIRRKKHAIHSSDTTSSDEERFERRKSKSMARARNRCLPMNFRAEDLASGILRERVKVGASLADVDPMNIDKSVRFDSIGGLSHHIHALKEMVVFPLLYPEIFEKFKIQPPRGCLFYGPPGTGKTLVARALANECSQGDKKVAFFMRKGADCLSKWVGESERQLRLLFDQAYLMRPSIIFFDEIDGLAPVRSSRQDQIHSSIVSTLLALMDGLDNRGEIVVIGATNRLDSIDPALRRPGRFDREFLFNLPDQKARKHILQIHTRDWNPKLSDAFLGELAEKCVGYCGADIKALCTEAALIALRRRYPQIYASSHKLQLDVSSIVLSAQDFYHAMQNIVPASQRAVMSSGHALSPIIRPLLERSFNNILAVLQKVFPHAEISQSDKKEDIETLILEDSEDENALSIFETNCHSGSPKKQSSSAAIHKPYLHFTMSPYHQPTSYRPRLLLSGERGSGQTSHLAPALLHTLERFSVHRLDLPALYSVSAKTPEESCAQIFREARRTVPSIVYMPHIGDWWEAVSETVRATFLTLLQDIPSFSPIFLLSTSETMYSELPEEVKCIFRIQYEEVLYIQRPIEEDRRKFFQELILNQASMAPPRRKHAALCAMEVLPLALPSPPRQLSESEKSRMEDQEENTLRELRLFLRDVTKRLATDKRFNIFSKPVDIEEVSDYLEVIKEPMDLSTVITKIDKHNYLTAKDFLKDIDLICSNALEYNPDKDPGDKIIRHRACTLKDTAHAIIAAELDPEFNKLCEEIKEARIKRGLSVTSEQINPHSTGARKTETRVEEAFRHKQRNPMDVWHNSANKCAFRVRRKSRRRSQWGKGIIKKRKVNNLKKDEEDTKFADYENHTEDRKLLENGEFEVSTDCHEENGEETGDLSMTNDESSCDIMDLDQGQRLNNGAGTKENFASTEEESSNESLLVNSSSSLNPEQTSRKETFLKGNCLNGEASTDSFEGIPVLECQNGKLEVVSFCDSGDKCSSEQKILLEDQSKEKPETSTENHGDDLEKLEALECSNNEKLEPGSDVEVKDAELDKEGASKVKKYRKLILEQAKTTSLELVPEEPSEPVPPLIVDRERLKKLLDLLVDKSNNLAVDQLERLYSLLSQCIYRHRKDYDKSQLVEEMERTVHMFETFL.

The disordered stretch occupies residues 1–155; it reads MVNTRKSSLR…LRGEKKGDGD (155 aa). The residue at position 16 (Ser16) is a Phosphoserine. Positions 23 to 33 are enriched in gly residues; the sequence is PGAGAEPGATG. A compositionally biased stretch (low complexity) spans 34 to 58; it reads GSSHFISSRTRSSKTRAASCPAAKA. Residues Ser79, Ser81, and Ser86 each carry the phosphoserine modification. Residues 99-115 show a composition bias toward basic and acidic residues; sequence VCKDKSKSRSTGQREEW. Residues 116-129 are compositionally biased toward polar residues; sequence NLSTGQARLTSQPG. Ser140 carries the phosphoserine modification. Residue Thr221 is modified to Phosphothreonine. Positions 244-286 are disordered; it reads NSYGIQNHHEVSTEGEEEESQEEDGDIEVEEAEGEENDRPYNL. The span at 256–279 shows a compositional bias: acidic residues; it reads TEGEEEESQEEDGDIEVEEAEGEE. Ser318 bears the Phosphoserine mark. A compositionally biased stretch (basic residues) spans 321–332; sequence RRSHIRRKKHAI. A disordered region spans residues 321 to 353; sequence RRSHIRRKKHAIHSSDTTSSDEERFERRKSKSM. An ATP-binding site is contributed by 441-448; it reads GPPGTGKT. A Phosphoserine modification is found at Ser939. Positions 943–974 form a coiled coil; it reads QLSESEKSRMEDQEENTLRELRLFLRDVTKRL. The Bromo domain maps to 951–1066; the sequence is RMEDQEENTL…DTAHAIIAAE (116 aa). Disordered regions lie at residues 1189–1208, 1217–1257, and 1309–1330; these read DCHEENGEETGDLSMTNDES, QGQR…EQTS, and LLEDQSKEKPETSTENHGDDLE. The segment covering 1240–1252 has biased composition (low complexity); the sequence is NESLLVNSSSSLN. 2 positions are modified to phosphoserine: Ser1338 and Ser1347.

The protein belongs to the AAA ATPase family. Binds acetylated lysine residues in histone H1.4, H2A, H2B, H3 and H4 (in vitro).

The protein resides in the nucleus. In Homo sapiens (Human), this protein is ATPase family AAA domain-containing protein 2B (ATAD2B).